A 276-amino-acid polypeptide reads, in one-letter code: uncharacterized protein (276 aa).

Residue 15–22 participates in ATP binding; the sequence is GKGGVGKS. 4Fe-4S ferredoxin-type domains lie at 68–96 and 92–121; these read EIYEINDDCIRCGKCLDVCQFDAIGDFKI and GDFKINPILCEGCGACELICEFDAIEPIKR. Positions 76, 79, 82, 86, 101, 104, 107, and 111 each coordinate [4Fe-4S] cluster.

This is an uncharacterized protein from Methanocaldococcus jannaschii (strain ATCC 43067 / DSM 2661 / JAL-1 / JCM 10045 / NBRC 100440) (Methanococcus jannaschii).